A 725-amino-acid chain; its full sequence is G-quartet DNA-binding protein TGP1 (725 aa).

Residues 241–258 carry the Nuclear localization signal motif; the sequence is KKALTDVLQIHEKKERVH. Disordered stretches follow at residues 252-284 and 468-614; these read EKKERVHKQQNKNKNPRNAHKNHNRQRPNLQET and EIHK…GKRG. The span at 256–277 shows a compositional bias: basic residues; the sequence is RVHKQQNKNKNPRNAHKNHNRQ. Basic and acidic residues predominate over residues 468 to 478; that stretch reads EIHKIDRERKR. Over residues 517-544 the composition is skewed to low complexity; it reads NKYKNTSVQNNNNNKNQQRSQSQNQRPP. A compositionally biased stretch (basic and acidic residues) spans 545-564; that stretch reads RNYDNRQGGENRNNRQRNEN. Positions 565–593 are enriched in low complexity; it reads NRNNFNGNGHRVNNQNNQRNRNSSYPRNN.

Post-translationally, the N-terminus is blocked.

The protein resides in the nucleus. In terms of biological role, binds specifically to parallel G4-DNA, a four-stranded structure stabilized by tetrads of hydrogen-bonded guanines. The protein is G-quartet DNA-binding protein TGP1 (TGP1) of Tetrahymena thermophila.